A 409-amino-acid polypeptide reads, in one-letter code: MIQGERLWQRLMELGEVGKQPSGGVTRLSFTAEERRAKDLVASYMREAGLFVYEDAAGNLIGRKEGTNPDATVVLVGSHLDSVYNGGCFDGPLGVLAGVEVVQTMNEHGVVTHHPIEVVAFTDEEGARFRFGMIGSRAMAGTLPPEALECRDAEGISLAEAMKQAGLDPDRLPQAARKPGTVKAYVELHIEQGRVLEEAGLPVGIVTGIAGLIWVKFTIAGPAEHAGATPMSLRRDPMAAAAQIIIVIEEEARRTGTTVGTVGQLHVYPGGINVIPERVEFVLDLRDLKAEVRDQVWKAIAVRAETIAKERNVRLTTERLQEMAPVLCSEVVKQAAERACKQLGYPPFWLPSGAAHDGVQLAPICPIGMIFVRSQDGVSHSPAEWSTKEDCAVGAEVLYHTVWQLAQGE.

A divalent metal cation is bound by residues His-79, Asp-90, Glu-125, and His-189. The an N-carbamoyl-L-alpha-amino acid site is built by Gln-192, His-225, Asn-273, Arg-286, and Ala-355. The tract at residues 208–325 (GIAGLIWVKF…TTERLQEMAP (118 aa)) is involved in dimerization. An a divalent metal cation-binding site is contributed by His-380.

It belongs to the peptidase M20 family. In terms of assembly, homodimer. Requires Mn(2+) as cofactor. The cofactor is Ni(2+). Co(2+) serves as cofactor. It depends on Fe(2+) as a cofactor.

It catalyses the reaction an N-carbamoyl-L-alpha-amino acid + H2O + 2 H(+) = an L-alpha-amino acid + NH4(+) + CO2. The catalysed reaction is N-carbamoyl-L-methionine + H2O + 2 H(+) = L-methionine + NH4(+) + CO2. It carries out the reaction N-acetyl-L-methionine + H2O = L-methionine + acetate. The enzyme catalyses N-carbamoyl-L-alanine + H2O + 2 H(+) = L-alanine + NH4(+) + CO2. It catalyses the reaction N-carbamoyl-L-glutamate + H2O + 2 H(+) = L-glutamate + NH4(+) + CO2. The catalysed reaction is N-carbamoylglycine + H2O + 2 H(+) = glycine + NH4(+) + CO2. It carries out the reaction N-carbamoyl-L-leucine + H2O + 2 H(+) = L-leucine + NH4(+) + CO2. Its function is as follows. Catalyzes the hydrolysis of aliphatic N-carbamoyl-L-alpha-amino acids to free L-alpha-amino acids. Is strictly L-specific since it is inactive toward N-carbamoyl-D-alpha-amino acids. Is not able to use aromatic N-carbamoyl-L-alpha-amino acids like N-carbamoyl-L-tryptophan and N-carbamoyl-L-phenylalanine as substrates, but is also able to hydrolyze N-acetyl-L-methionine. This is N-carbamoyl-L-amino acid amidohydrolase from Geobacillus stearothermophilus (Bacillus stearothermophilus).